Consider the following 317-residue polypeptide: Biotin synthase (317 aa).

A Radical SAM core domain is found at 42–260; that stretch reads NRIQLSTLLS…IAVTRLCMPK (219 aa). [4Fe-4S] cluster contacts are provided by C57, C61, and C64. [2Fe-2S] cluster is bound by residues C101, C132, C192, and R264.

It belongs to the radical SAM superfamily. Biotin synthase family. As to quaternary structure, homodimer. The cofactor is [4Fe-4S] cluster. [2Fe-2S] cluster serves as cofactor.

It carries out the reaction (4R,5S)-dethiobiotin + (sulfur carrier)-SH + 2 reduced [2Fe-2S]-[ferredoxin] + 2 S-adenosyl-L-methionine = (sulfur carrier)-H + biotin + 2 5'-deoxyadenosine + 2 L-methionine + 2 oxidized [2Fe-2S]-[ferredoxin]. It participates in cofactor biosynthesis; biotin biosynthesis; biotin from 7,8-diaminononanoate: step 2/2. Catalyzes the conversion of dethiobiotin (DTB) to biotin by the insertion of a sulfur atom into dethiobiotin via a radical-based mechanism. In Thiobacillus denitrificans (strain ATCC 25259 / T1), this protein is Biotin synthase.